The sequence spans 335 residues: Fructose-1,6-bisphosphatase class 1 (335 aa).

Residues Glu-94, Asp-113, Leu-115, and Asp-116 each coordinate Mg(2+). Substrate-binding positions include 116–119 (DGSS), Asn-208, and Lys-274. Glu-280 serves as a coordination point for Mg(2+).

Belongs to the FBPase class 1 family. Homotetramer. The cofactor is Mg(2+).

The protein resides in the cytoplasm. The enzyme catalyses beta-D-fructose 1,6-bisphosphate + H2O = beta-D-fructose 6-phosphate + phosphate. It functions in the pathway carbohydrate biosynthesis; gluconeogenesis. This chain is Fructose-1,6-bisphosphatase class 1, found in Polynucleobacter asymbioticus (strain DSM 18221 / CIP 109841 / QLW-P1DMWA-1) (Polynucleobacter necessarius subsp. asymbioticus).